A 215-amino-acid polypeptide reads, in one-letter code: Cytochrome b6 (215 aa).

The chain crosses the membrane as a helical span at residues 32–52 (IFYCLGGIVFVSFLIQVATGF). Position 35 (cysteine 35) interacts with heme c. The heme b site is built by histidine 86 and histidine 100. The next 3 helical transmembrane spans lie at 90 to 110 (VSMM…TGGF), 116 to 136 (LTWV…VTGY), and 186 to 206 (LHTF…FLMI). Positions 187 and 202 each coordinate heme b.

This sequence belongs to the cytochrome b family. PetB subfamily. As to quaternary structure, the 4 large subunits of the cytochrome b6-f complex are cytochrome b6, subunit IV (17 kDa polypeptide, PetD), cytochrome f and the Rieske protein, while the 4 small subunits are PetG, PetL, PetM and PetN. The complex functions as a dimer. It depends on heme b as a cofactor. Heme c is required as a cofactor.

The protein localises to the plastid. It localises to the chloroplast thylakoid membrane. Functionally, component of the cytochrome b6-f complex, which mediates electron transfer between photosystem II (PSII) and photosystem I (PSI), cyclic electron flow around PSI, and state transitions. The protein is Cytochrome b6 of Pyropia yezoensis (Susabi-nori).